The sequence spans 150 residues: Large ribosomal subunit protein bL9 (150 aa).

This sequence belongs to the bacterial ribosomal protein bL9 family.

Functionally, binds to the 23S rRNA. This chain is Large ribosomal subunit protein bL9, found in Saccharopolyspora erythraea (strain ATCC 11635 / DSM 40517 / JCM 4748 / NBRC 13426 / NCIMB 8594 / NRRL 2338).